The primary structure comprises 186 residues: Elongation factor P (186 aa).

Belongs to the elongation factor P family.

Its subcellular location is the cytoplasm. The protein operates within protein biosynthesis; polypeptide chain elongation. Its function is as follows. Involved in peptide bond synthesis. Stimulates efficient translation and peptide-bond synthesis on native or reconstituted 70S ribosomes in vitro. Probably functions indirectly by altering the affinity of the ribosome for aminoacyl-tRNA, thus increasing their reactivity as acceptors for peptidyl transferase. This Pelagibacter ubique (strain HTCC1062) protein is Elongation factor P.